A 390-amino-acid polypeptide reads, in one-letter code: DNA polymerase IV (390 aa).

The UmuC domain maps to 6–187 (VMHVDLDAFF…LDISIMPGIG (182 aa)). Mg(2+)-binding residues include Asp10 and Asp105. The active site involves Glu106.

This sequence belongs to the DNA polymerase type-Y family. In terms of assembly, monomer. Mg(2+) is required as a cofactor.

The protein localises to the cytoplasm. The catalysed reaction is DNA(n) + a 2'-deoxyribonucleoside 5'-triphosphate = DNA(n+1) + diphosphate. In terms of biological role, poorly processive, error-prone DNA polymerase involved in untargeted mutagenesis. Copies undamaged DNA at stalled replication forks, which arise in vivo from mismatched or misaligned primer ends. These misaligned primers can be extended by PolIV. Exhibits no 3'-5' exonuclease (proofreading) activity. May be involved in translesional synthesis, in conjunction with the beta clamp from PolIII. The polypeptide is DNA polymerase IV (Dehalococcoides mccartyi (strain ATCC BAA-2266 / KCTC 15142 / 195) (Dehalococcoides ethenogenes (strain 195))).